The primary structure comprises 128 residues: Large ribosomal subunit protein bL17 (128 aa).

The protein belongs to the bacterial ribosomal protein bL17 family. Part of the 50S ribosomal subunit. Contacts protein L32.

The chain is Large ribosomal subunit protein bL17 from Streptococcus sanguinis (strain SK36).